Reading from the N-terminus, the 264-residue chain is MEAAPRVRSGLLRILLRAGRLSALLIQNRTHLYRFLLLKMAIFQHWVLGLAQEARGSGSDQARQLPEVIITCALSLALRAGLTLLWVPMWLLLWGPRLAYRVGLCCTRTVRLALGHLCVCEPLGLSPATFRDLFLSCLHSLMLVALLLLLLTWKLMQKAHHFSLGWLPSQNSVLLEAPALLRRLYLWVEHRTTLTSWNLAYLVTWTTCLASHLLQAAFEHTTQLAQAQEVKSQETSGPPPQFLIPESSTTESGPLPPQPETPGE.

The next 3 helical transmembrane spans lie at 31 to 51 (HLYR…LGLA), 74 to 94 (LSLA…LLLW), and 133 to 153 (LFLS…LLTW). Positions 227–236 (AQEVKSQETS) are enriched in polar residues. Residues 227-264 (AQEVKSQETSGPPPQFLIPESSTTESGPLPPQPETPGE) form a disordered region. Residues 254–264 (PLPPQPETPGE) are compositionally biased toward pro residues.

As to expression, testis.

It is found in the membrane. This chain is Transmembrane protein 270, found in Mus musculus (Mouse).